The chain runs to 194 residues: Superoxide dismutase [Cu-Zn] (194 aa).

Residues 1 to 20 (MTRPLALIIFLVAILTNTDP) form the signal peptide. Positions 85 and 104 each coordinate Cu cation. A disulfide bond links Cys-96 and Cys-188. Positions 104, 112, 121, and 124 each coordinate Zn(2+). His-162 contributes to the Cu cation binding site.

It belongs to the Cu-Zn superoxide dismutase family. Homodimer. The cofactor is Cu cation. Zn(2+) serves as cofactor.

It carries out the reaction 2 superoxide + 2 H(+) = H2O2 + O2. Its function is as follows. Destroys radicals which are normally produced within the cells and which are toxic to biological systems. This is Superoxide dismutase [Cu-Zn] from Ramazzottius varieornatus (Water bear).